The sequence spans 848 residues: Xylosyltransferase (848 aa).

At 1 to 14 (MSLHRTLRRFLRKW) the chain is on the cytoplasmic side. The helical; Signal-anchor for type II membrane protein transmembrane segment at 15–35 (KALVYAVSFILLIQAFFTFQS) threads the bilayer. Topologically, residues 36–843 (SPNLMEEEHL…PKTELISVKP (808 aa)) are lumenal. 4 disulfides stabilise this stretch: Cys145-Cys173, Cys189-Cys427, Cys446-Cys459, and Cys448-Cys457. UDP-alpha-D-xylose is bound by residues Val219, Asp247, and 276–278 (TIW). N-linked (GlcNAc...) asparagine glycosylation is present at Asn306. 379–380 (DW) serves as a coordination point for UDP-alpha-D-xylose. Residues Ser460 and 482–483 (RK) contribute to the UDP-alpha-D-xylose site. Disulfide bonds link Cys529–Cys811 and Cys794–Cys822. Asn530 carries N-linked (GlcNAc...) asparagine glycosylation. The segment at 824–848 (NTNWSSLSPDPKTELISVKPDGRIR) is disordered. N-linked (GlcNAc...) asparagine glycosylation occurs at Asn826.

Belongs to the glycosyltransferase 14 family. XylT subfamily. It depends on a divalent metal cation as a cofactor.

Its subcellular location is the endoplasmic reticulum membrane. The protein localises to the golgi apparatus membrane. The catalysed reaction is UDP-alpha-D-xylose + L-seryl-[protein] = 3-O-(beta-D-xylosyl)-L-seryl-[protein] + UDP + H(+). The protein operates within glycan metabolism; chondroitin sulfate biosynthesis. It functions in the pathway glycan metabolism; heparan sulfate biosynthesis. Catalyzes the first step in biosynthesis of glycosaminoglycan. Transfers D-xylose from UDP-D-xylose to specific serine residues of the core protein. Initial enzyme in the biosynthesis of chondroitin sulfate and dermatan sulfate proteoglycans in fibroblasts and chondrocytes. This Ciona intestinalis (Transparent sea squirt) protein is Xylosyltransferase (xt).